A 188-amino-acid chain; its full sequence is Putative adenylate kinase (188 aa).

Residues Gly-10, Gly-12, Lys-13, Ser-14, and Thr-15 each contribute to the ATP site. The interval His-30–Ile-53 is NMP. The tract at residues Arg-103–Glu-113 is LID. Arg-104 and Lys-142 together coordinate ATP.

Belongs to the adenylate kinase family. AK6 subfamily. Interacts with uS11. Not a structural component of 40S pre-ribosomes, but transiently interacts with them by binding to uS11.

It carries out the reaction AMP + ATP = 2 ADP. It catalyses the reaction ATP + H2O = ADP + phosphate + H(+). Broad-specificity nucleoside monophosphate (NMP) kinase that catalyzes the reversible transfer of the terminal phosphate group between nucleoside triphosphates and monophosphates. Also has ATPase activity. Involved in the late maturation steps of the 30S ribosomal particles, specifically 16S rRNA maturation. While NMP activity is not required for ribosome maturation, ATPase activity is. Associates transiently with small ribosomal subunit protein uS11. ATP hydrolysis breaks the interaction with uS11. May temporarily remove uS11 from the ribosome to enable a conformational change of the ribosomal RNA that is needed for the final maturation step of the small ribosomal subunit. This chain is Putative adenylate kinase, found in Sulfurisphaera tokodaii (strain DSM 16993 / JCM 10545 / NBRC 100140 / 7) (Sulfolobus tokodaii).